The primary structure comprises 278 residues: Glutamate racemase (278 aa).

Substrate contacts are provided by residues 25–26 (DS) and 57–58 (YG). C89 functions as the Proton donor/acceptor in the catalytic mechanism. 90–91 (NT) contacts substrate. C204 serves as the catalytic Proton donor/acceptor. Position 205-206 (205-206 (TH)) interacts with substrate.

The protein belongs to the aspartate/glutamate racemases family.

The enzyme catalyses L-glutamate = D-glutamate. The protein operates within cell wall biogenesis; peptidoglycan biosynthesis. In terms of biological role, provides the (R)-glutamate required for cell wall biosynthesis. The protein is Glutamate racemase of Brucella anthropi (strain ATCC 49188 / DSM 6882 / CCUG 24695 / JCM 21032 / LMG 3331 / NBRC 15819 / NCTC 12168 / Alc 37) (Ochrobactrum anthropi).